The primary structure comprises 199 residues: Thymidine kinase (199 aa).

ATP contacts are provided by residues 15–22 (GSMFSGKS) and 88–91 (DEVQ). Glu-89 serves as the catalytic Proton acceptor. Residues Cys-145, Cys-148, Cys-183, and His-186 each coordinate Zn(2+).

The protein belongs to the thymidine kinase family. Homotetramer.

It localises to the cytoplasm. The enzyme catalyses thymidine + ATP = dTMP + ADP + H(+). This chain is Thymidine kinase, found in Staphylococcus saprophyticus subsp. saprophyticus (strain ATCC 15305 / DSM 20229 / NCIMB 8711 / NCTC 7292 / S-41).